Reading from the N-terminus, the 338-residue chain is Solute-binding protein Rfer_1840 (338 aa).

Positions 1–25 are cleaved as a signal peptide; it reads MQRRQLLQSMGGLAASTMPFSLAFA. Malonate contacts are provided by residues arginine 47, tyrosine 100, arginine 175, serine 197, 214–218, and glutamate 244; that span reads TSSTS.

Belongs to the bacterial solute-binding protein 7 family. In terms of assembly, the complex is comprised of an extracytoplasmic solute-binding protein and a heteromeric permease formed by two transmembrane proteins.

It is found in the periplasm. Functionally, solute-binding protein that binds malonate (in vitro). Probably part of a tripartite ATP-independent periplasmic (TRAP) transport system that mediates solute transport into the cytoplasm. This chain is Solute-binding protein Rfer_1840, found in Albidiferax ferrireducens (strain ATCC BAA-621 / DSM 15236 / T118) (Rhodoferax ferrireducens).